The chain runs to 477 residues: Glutamyl-tRNA(Gln) amidotransferase subunit A (477 aa).

Active-site charge relay system residues include lysine 76 and serine 151. The active-site Acyl-ester intermediate is serine 175.

Belongs to the amidase family. GatA subfamily. As to quaternary structure, heterotrimer of A, B and C subunits.

It catalyses the reaction L-glutamyl-tRNA(Gln) + L-glutamine + ATP + H2O = L-glutaminyl-tRNA(Gln) + L-glutamate + ADP + phosphate + H(+). Allows the formation of correctly charged Gln-tRNA(Gln) through the transamidation of misacylated Glu-tRNA(Gln) in organisms which lack glutaminyl-tRNA synthetase. The reaction takes place in the presence of glutamine and ATP through an activated gamma-phospho-Glu-tRNA(Gln). The sequence is that of Glutamyl-tRNA(Gln) amidotransferase subunit A from Prosthecochloris aestuarii (strain DSM 271 / SK 413).